The following is a 184-amino-acid chain: MKNITDSFVSLGHWPFAGSFGFNTDILATNLINLSVVLGVLIFFGKGVLSDLLDNRRQRILSTIRNSEELRRGALEQLEKARARLRKVEMEADEYRVNGYSEIEREKMNLINATYENLERLENYKNETLHFEQQRAINQVRQRVFQQALQGALGTLNNCLNSELHFRTISANIGMLGAMKEITD.

Residues 26–48 (ILATNLINLSVVLGVLIFFGKGV) form a helical membrane-spanning segment.

This sequence belongs to the ATPase B chain family. As to quaternary structure, F-type ATPases have 2 components, F(1) - the catalytic core - and F(0) - the membrane proton channel. F(1) has five subunits: alpha(3), beta(3), gamma(1), delta(1), epsilon(1). F(0) has four main subunits: a(1), b(1), b'(1) and c(10-14). The alpha and beta chains form an alternating ring which encloses part of the gamma chain. F(1) is attached to F(0) by a central stalk formed by the gamma and epsilon chains, while a peripheral stalk is formed by the delta, b and b' chains.

The protein resides in the plastid. It localises to the chloroplast thylakoid membrane. In terms of biological role, f(1)F(0) ATP synthase produces ATP from ADP in the presence of a proton or sodium gradient. F-type ATPases consist of two structural domains, F(1) containing the extramembraneous catalytic core and F(0) containing the membrane proton channel, linked together by a central stalk and a peripheral stalk. During catalysis, ATP synthesis in the catalytic domain of F(1) is coupled via a rotary mechanism of the central stalk subunits to proton translocation. Its function is as follows. Component of the F(0) channel, it forms part of the peripheral stalk, linking F(1) to F(0). This Acorus calamus (Sweet flag) protein is ATP synthase subunit b, chloroplastic.